A 760-amino-acid polypeptide reads, in one-letter code: Catalase-peroxidase (760 aa).

A disordered region spans residues 1 to 24; it reads MAESKCPFKSQGSRSNVAGGGTRN. Positions 96-242 form a cross-link, tryptophyl-tyrosyl-methioninium (Trp-Tyr) (with M-268); it reads WHSAGTYRVF…LAAAHMGLIY (147 aa). The Proton acceptor role is filled by H97. Residues 242 to 268 constitute a cross-link (tryptophyl-tyrosyl-methioninium (Tyr-Met) (with W-96)); that stretch reads YVNPEGPDGNPDPVAAAHDIRVTFGRM. Heme b is bound at residue H283.

This sequence belongs to the peroxidase family. Peroxidase/catalase subfamily. Homodimer or homotetramer. It depends on heme b as a cofactor. In terms of processing, formation of the three residue Trp-Tyr-Met cross-link is important for the catalase, but not the peroxidase activity of the enzyme.

The protein resides in the cytoplasm. It catalyses the reaction H2O2 + AH2 = A + 2 H2O. It carries out the reaction 2 H2O2 = O2 + 2 H2O. In terms of biological role, bifunctional enzyme with both catalase and broad-spectrum peroxidase activity. The protein is Catalase-peroxidase of Aspergillus clavatus (strain ATCC 1007 / CBS 513.65 / DSM 816 / NCTC 3887 / NRRL 1 / QM 1276 / 107).